The chain runs to 2458 residues: Highly reducing polyketide synthase alnA (2458 aa).

The Ketosynthase family 3 (KS3) domain maps to 48 to 473 (TMPIAIVGMA…GANAHVILDD (426 aa)). Catalysis depends on for beta-ketoacyl synthase activity residues C221, H356, and H396. The interval 488–515 (HTTLSESEDSSDSGLEMDSSTSDSGEGQ) is disordered. A compositionally biased stretch (low complexity) spans 499 to 515 (DSGLEMDSSTSDSGEGQ). The interval 609–932 (VFTGQGAQWP…PYMSVLSRGK (324 aa)) is malonyl-CoA:ACP transacylase (MAT) domain. The active-site For malonyltransferase activity is S697. An N-terminal hotdog fold region spans residues 1000–1130 (NDLLGVPVAQ…GSFSLHYEDA (131 aa)). One can recognise a PKS/mFAS DH domain in the interval 1000 to 1307 (NDLLGVPVAQ…VTEVSAGAST (308 aa)). The interval 1001 to 1305 (DLLGVPVAQQ…MTVTEVSAGA (305 aa)) is dehydratase (DH) domain. The active-site Proton acceptor; for dehydratase activity is the H1032. The tract at residues 1148–1307 (TRACRKLDVE…VTEVSAGAST (160 aa)) is C-terminal hotdog fold. The active-site Proton donor; for dehydratase activity is D1218. Residues 1740–2051 (GSPSQARWVP…GQQQHERVAA (312 aa)) are enoylreductase (ER) domain. The interval 2076 to 2264 (KPDATYILAG…VTDASHFNEN (189 aa)) is ketoreductase (KR) domain. Residues 2359–2441 (STTVAQAHEV…RLALKIVSKS (83 aa)) enclose the Carrier domain. S2401 bears the O-(pantetheine 4'-phosphoryl)serine mark.

Its pathway is polyketide biosynthesis. Its function is as follows. Highly reducing polyketide synthase; part of the gene cluster that mediates the biosynthesis of asperlin, a polyketide showing anti-inflammatory, antitumor and antibiotic activities. The first step of the asperlin biosynthesis is the production of the intermediate 2,4,6-octatrienoic acid by the highly redusing polyketide synthase alnA with cleavage of the PKS product by the esterase alnB. 2,4,6-octatrienoic acid is further converted to asperlin via several steps involving the remaining enzymes from the cluster. The sequence is that of Highly reducing polyketide synthase alnA from Emericella nidulans (strain FGSC A4 / ATCC 38163 / CBS 112.46 / NRRL 194 / M139) (Aspergillus nidulans).